The primary structure comprises 132 residues: Extracellular small neutral protease (132 aa).

Residues Asp-76 and Thr-78 each coordinate Ca(2+). A Zn(2+)-binding site is contributed by His-83. Residue Glu-84 is part of the active site. His-87 and Asp-93 together coordinate Zn(2+). A disulfide bridge connects residues Cys-99 and Cys-112.

This sequence belongs to the peptidase M7 family. Ca(2+) is required as a cofactor. Requires Zn(2+) as cofactor.

It is found in the secreted. It carries out the reaction Hydrolyzes proteins with a preference for Tyr or Phe in the P1' position. Has no action on amino-acid p-nitroanilides.. In terms of biological role, specifically hydrolyzes the peptide bond at the imino side of aromatic residues. The chain is Extracellular small neutral protease (snpA) from Streptomyces caespitosus.